Here is a 778-residue protein sequence, read N- to C-terminus: Endonuclease MutS2 (778 aa).

Residue 328–335 (GPNTGGKT) participates in ATP binding. The region spanning 702–777 (LDLRGKRYEE…GSGATIVTFK (76 aa)) is the Smr domain.

It belongs to the DNA mismatch repair MutS family. MutS2 subfamily. Homodimer. Binds to stalled ribosomes, contacting rRNA.

Its function is as follows. Endonuclease that is involved in the suppression of homologous recombination and thus may have a key role in the control of bacterial genetic diversity. In terms of biological role, acts as a ribosome collision sensor, splitting the ribosome into its 2 subunits. Detects stalled/collided 70S ribosomes which it binds and splits by an ATP-hydrolysis driven conformational change. Acts upstream of the ribosome quality control system (RQC), a ribosome-associated complex that mediates the extraction of incompletely synthesized nascent chains from stalled ribosomes and their subsequent degradation. Probably generates substrates for RQC. This is Endonuclease MutS2 from Streptococcus pneumoniae serotype 2 (strain D39 / NCTC 7466).